The primary structure comprises 375 residues: Chaperone protein DnaJ (375 aa).

Positions 5 to 70 (DYYEVLGVNR…QKKGAYDRYG (66 aa)) constitute a J domain. A CR-type zinc finger spans residues 134–212 (GAEKTIRIPT…CGGAGRVKKQ (79 aa)). Cysteine 147, cysteine 150, cysteine 164, cysteine 167, cysteine 186, cysteine 189, cysteine 200, and cysteine 203 together coordinate Zn(2+). CXXCXGXG motif repeat units lie at residues 147 to 154 (CGTCHGSG), 164 to 171 (CPTCGGAG), 186 to 193 (CPKCHGTG), and 200 to 207 (CGDCGGAG).

Belongs to the DnaJ family. As to quaternary structure, homodimer. Zn(2+) serves as cofactor.

Its subcellular location is the cytoplasm. In terms of biological role, participates actively in the response to hyperosmotic and heat shock by preventing the aggregation of stress-denatured proteins and by disaggregating proteins, also in an autonomous, DnaK-independent fashion. Unfolded proteins bind initially to DnaJ; upon interaction with the DnaJ-bound protein, DnaK hydrolyzes its bound ATP, resulting in the formation of a stable complex. GrpE releases ADP from DnaK; ATP binding to DnaK triggers the release of the substrate protein, thus completing the reaction cycle. Several rounds of ATP-dependent interactions between DnaJ, DnaK and GrpE are required for fully efficient folding. Also involved, together with DnaK and GrpE, in the DNA replication of plasmids through activation of initiation proteins. This Azoarcus sp. (strain BH72) protein is Chaperone protein DnaJ.